A 602-amino-acid polypeptide reads, in one-letter code: Elongation factor 4 (602 aa).

Residues serine 7–glutamine 189 form the tr-type G domain. Residues aspartate 19–threonine 24 and asparagine 136–aspartate 139 contribute to the GTP site.

This sequence belongs to the TRAFAC class translation factor GTPase superfamily. Classic translation factor GTPase family. LepA subfamily.

It is found in the cell inner membrane. The catalysed reaction is GTP + H2O = GDP + phosphate + H(+). Its function is as follows. Required for accurate and efficient protein synthesis under certain stress conditions. May act as a fidelity factor of the translation reaction, by catalyzing a one-codon backward translocation of tRNAs on improperly translocated ribosomes. Back-translocation proceeds from a post-translocation (POST) complex to a pre-translocation (PRE) complex, thus giving elongation factor G a second chance to translocate the tRNAs correctly. Binds to ribosomes in a GTP-dependent manner. This chain is Elongation factor 4, found in Prochlorococcus marinus subsp. pastoris (strain CCMP1986 / NIES-2087 / MED4).